The chain runs to 199 residues: ATP-dependent Clp protease proteolytic subunit (199 aa).

Positions 1–23 (MTTSAARKGLRTRGSACPRATRS) are disordered. Residue serine 100 is the Nucleophile of the active site. Residue histidine 125 is part of the active site.

This sequence belongs to the peptidase S14 family. Fourteen ClpP subunits assemble into 2 heptameric rings which stack back to back to give a disk-like structure with a central cavity, resembling the structure of eukaryotic proteasomes.

The protein localises to the cytoplasm. The enzyme catalyses Hydrolysis of proteins to small peptides in the presence of ATP and magnesium. alpha-casein is the usual test substrate. In the absence of ATP, only oligopeptides shorter than five residues are hydrolyzed (such as succinyl-Leu-Tyr-|-NHMec, and Leu-Tyr-Leu-|-Tyr-Trp, in which cleavage of the -Tyr-|-Leu- and -Tyr-|-Trp bonds also occurs).. Functionally, cleaves peptides in various proteins in a process that requires ATP hydrolysis. Has a chymotrypsin-like activity. Plays a major role in the degradation of misfolded proteins. This Paracoccus denitrificans protein is ATP-dependent Clp protease proteolytic subunit.